A 317-amino-acid chain; its full sequence is MEKTNHSLTTQFILVGFSDHPDLKTPLFLLFSVIYLVTMVGNLGLVAVIYLEPRLHTPMYIFLGNLALMDSCCSCAITPKILENFFSVDRRISLYECMAQFYFLCLAETADCFLLAAMAYDRYVAICNPLQYHSMMSKKLSIQMSIGTFITSNLHSLIHVGCLLRLTFCKSNRIDHFFCDILPLYRLSCTDPFINELMIYIFSMPIQVFTITTVLVSYFCILLTIFKMKSKDGRGKAFSTCASHFFSVSIFYVCLLMYIRPFDEGNKDIPVAVFYTIIIPLLNPFIYSLRNKEVVNAVKKVMKTHSIFKNASASMAR.

Residues Met-1–Phe-28 lie on the Extracellular side of the membrane. An N-linked (GlcNAc...) asparagine glycan is attached at Asn-5. A helical transmembrane segment spans residues Leu-29–Ile-49. The Cytoplasmic portion of the chain corresponds to Tyr-50–His-56. Residues Thr-57–Ile-77 traverse the membrane as a helical segment. At Thr-78–Ser-93 the chain is on the extracellular side. Residues Leu-94–Leu-114 form a helical membrane-spanning segment. Cys-97 and Cys-189 are disulfide-bonded. Over Leu-115–Met-144 the chain is Cytoplasmic. Residues Ser-145–Arg-165 form a helical membrane-spanning segment. Over Leu-166–Met-198 the chain is Extracellular. Residues Ile-199 to Phe-219 form a helical membrane-spanning segment. The Cytoplasmic portion of the chain corresponds to Cys-220 to Ser-239. A helical transmembrane segment spans residues Thr-240–Ile-259. Residues Arg-260 to Asp-268 are Extracellular-facing. A helical membrane pass occupies residues Ile-269–Leu-289. Residues Arg-290–Arg-317 lie on the Cytoplasmic side of the membrane.

Belongs to the G-protein coupled receptor 1 family.

It localises to the cell membrane. Potential odorant receptor. The polypeptide is Olfactory receptor 5K16 (Mus musculus (Mouse)).